Consider the following 212-residue polypeptide: Large ribosomal subunit protein uL1 (212 aa).

Belongs to the universal ribosomal protein uL1 family. In terms of assembly, part of the 50S ribosomal subunit.

Functionally, binds directly to 23S rRNA. Probably involved in E site tRNA release. Its function is as follows. Protein L1 is also a translational repressor protein, it controls the translation of its operon by binding to its mRNA. This is Large ribosomal subunit protein uL1 from Haloferax volcanii (strain ATCC 29605 / DSM 3757 / JCM 8879 / NBRC 14742 / NCIMB 2012 / VKM B-1768 / DS2) (Halobacterium volcanii).